The primary structure comprises 363 residues: Flagellar P-ring protein 2 (363 aa).

The N-terminal stretch at 1-20 (MKRIVLLLMSVALFSTAAQA) is a signal peptide.

This sequence belongs to the FlgI family. As to quaternary structure, the basal body constitutes a major portion of the flagellar organelle and consists of four rings (L,P,S, and M) mounted on a central rod.

The protein localises to the periplasm. Its subcellular location is the bacterial flagellum basal body. In terms of biological role, assembles around the rod to form the L-ring and probably protects the motor/basal body from shearing forces during rotation. The polypeptide is Flagellar P-ring protein 2 (flgI2) (Vibrio parahaemolyticus serotype O3:K6 (strain RIMD 2210633)).